The following is a 317-amino-acid chain: Putative 2-hydroxyacid dehydrogenase SERP1888 (317 aa).

Residues 155–156, 234–236, and Asp260 contribute to the NAD(+) site; these read EI and AGR. Arg236 is a catalytic residue. Glu265 is a catalytic residue. The Proton donor role is filled by His283. NAD(+) is bound at residue 283–286; it reads HIGN.

Belongs to the D-isomer specific 2-hydroxyacid dehydrogenase family.

This is Putative 2-hydroxyacid dehydrogenase SERP1888 from Staphylococcus epidermidis (strain ATCC 35984 / DSM 28319 / BCRC 17069 / CCUG 31568 / BM 3577 / RP62A).